The sequence spans 396 residues: Protein ANTAGONIST OF LIKE HETEROCHROMATIN PROTEIN 1 (396 aa).

Composition is skewed to basic residues over residues 1 to 12 (MAPVKQKKKNKK) and 20 to 29 (KLAKNKEKKR). The tract at residues 1–29 (MAPVKQKKKNKKKPLDKAKKLAKNKEKKR) is disordered. A Nuclear localization signal motif is present at residues 6–13 (QKKKNKKK). The DDE Tnp4 domain occupies 183-348 (IDTTHIIMTL…IILVCCLLHN (166 aa)).

The protein belongs to the HARBI1 family. Interacts with core components of POLYCOMB REPRESSIVE COMPLEX 2 (PRC2), a PcG protein complex with H3K27me3 histone methyltransferase activity. Associates with plant-specific PRC2 accessory components such as MSI1, EMF2, VRN2, FIE and CLF. Requires a divalent metal cation as cofactor. Expressed in roots, inflorescence stems, seedlings, leaves, flower buds, inflorescences, and siliques.

The protein localises to the nucleus. Its function is as follows. Transposase-derived protein that may have nuclease activity. Antagonist of polycomb-group (PcG) protein-mediated chromatin silencing, probably by preventing the association of POLYCOMB REPRESSIVE COMPLEX 2 (PRC2) with its accessory components. Needed for full reactivation of several floral homeotic genes that are repressed by PcG. This is Protein ANTAGONIST OF LIKE HETEROCHROMATIN PROTEIN 1 from Arabidopsis thaliana (Mouse-ear cress).